A 6781-amino-acid polypeptide reads, in one-letter code: MASNHVTLAFANDAEISAFGFCTASEAVSYYSEAAASGFMQCRFVSLDLADTVEGLLPEDYVMVVIGTTKLSAYVDTFGSRPRNICGWLLFSNCNYFLEELELTFGRRGGNIVPVDQYMCGADGKPVLQESEWEYTDFFADSEDGQLNIAGITYVKAWIVERSDVSYASQNLTSIKSITYCSTYEHTFLDGTAMKVARTPKIKKNVVLSEPLATIYREIGSPFVDNGSDARSIIRRPVFLHAFVKCKCGSYHWTVGDWTSYVSTCCGFKCKPVLVASCSAMPGSVVVTRAGAGTGVKYYNNMFLRHVADIDGLAFWRILKVQSKDDLACSGKFLEHHEEGFTDPCYFLNDSSLATKLKFDILSGKFSDEVKQAIIAGHVVVGSALVDIVDDALGQPWFIRKLGDLASAPWEQLKAVVRGLGLLSDEVVLFGKRLSCATLSIVNGVFEFLADVPEKLAAAVTVFVNFLNEFFESACDCLKVGGKTFNKVGSYVLFDNALVKLVKAKARGPRQAGICEVRYTSLVVGSTTKVVSKRVENANVNLVVVDEDVTLNTTGRTVVVDGLAFFESDGFYRHLADADVVIEHPVYKSACELKPVFECDPIPDFPLPVAASVAELCVQTDLLLKNYNTPYKTYSCVVRGDKCCITCTLQFKAPSYVEDAVNFVDLCTKNIGTAGFHEFYITAHEQQDLQGFLTTCCTMSGFECFMPTIPQCPAVLEEIDGGSIWRSFITGLNTMWDFCKRLKVSFGLDGIVVTVARKFKRLGALLAEMYNTYLSTVVENLVLAGVSFKYYATSVPKIVLGGCFHSVKSVFASVFQIPVQAGIEKFKVFLNCVHPVVPRVIETSFVELEETTFKPPALNGGIAIVDGFAFYYDGTLYYPTDGNSVVPICFKKKGGGDVKFSDEVSVKTIDPVYKVSLEFEFESETIMAVLNKAVGNRIKVTGGWDDVVEYINVAIEVLKDHVEVPKYYIYDEEGGTDPNLPVMVSQWPLNDDTISQDLLDVEVVTDAPIDSEGDEVDSSAPEKVADVANSEPGDDGLPVAPETNVESEVEEVAATLSFIKDTPSTVTKDPFAFDFVSYGGLKVLRQSHNNCWVTSTLVQLQLLGIVDDPAMELFSAGRVGPMVRKCYESQKAILGSLGDVSACLESLTKDLHTLKITCSVVCGCGTGERIYEGCAFRMTPTLEPFPYGACAQCAQVLMHTFKSIVGTGIFCRDTTALSLDSLVVKPLCAAAFIGKDSGHYVTNFYDAAMAIDGYGRHQIKYDTLNTICVKDVNWTAPLVPAVDSVVEPVVKPFYSYKNVDFYQGDFSDLVKLPCDFVVNAANEKLSHGGGIAKAIDVYTKGMLQKCSNDYIKAHGPIKVGRGVMLEALGLKVFNVVGPRKGKHAPELLVKAYKSVFANSGVALTPLISVGIFSVPLEESLSAFLACVGDRHCKCFCYGDKEREAIIKYMDGLVDAIFKEALVDTTPVQEDVQQVSQKPVLPNFEPFRIEGAHAFYECNPEGLMSLGADKLVLFTNSNLDFCSVGKCLNDVTSGALLEAINVFKKSNKTVPAGNCVTLDCANMISITMVVLPFDGDANYDKNYARAVVKVSKLKGKLVLAVDDATLYSKLSHLSVLGFVSTPDDVERFYANKSVVIKVTEDTRSVKAVKVESTATYGQQIGPCLVNDTVVTDNKPVVADVVAKVVPNANWDSHYGFDKAGEFHMLDHTGFTFPSEVVNGRRVIKTTDNNCWVNVTCLQLQFARFRFKSAGLQAMWESYCTGDVAMFVHWLYWLTGVDKGQPSDSENALNMLSKYIVPAGSVTIERVTHDGCCCSKRVVTAPVVNASVLKLGVEDGLCPHGLNYIGKVVVVKGTTIVVNVGKPVVAPSHLFLKGVSYTTFLDNGNGVVGHYTVFDHGTGMVHDGDAFVPGDLNVSPVTNVVVSEQTAVVIKDPVKKAELDATKLLDTMNYASERFFSFGDFMSRNLITVFLYILSILGLCFRAFRKRDVKVLAGVPQRTGIILRKSMRYNAKALGVFFKLKLYWFKVLGKFSLGIYALYALLFMTIRFTPIGSPVCDDVVAGYANSSFDKNEYCNSVICKVCLYGYQELSDFSHTQVVWQHLRDPLIGNVMPFFYLAFLAIFGGVYVKAITLYFIFQYLNSLGVFLGLQQSIWFLQLVPFDVFGDEIVVFFIVTRVLMFIKHVCLGCDKASCVACSKSARLKRVPVQTIFQGTSKSFYVHANGGSKFCKKHNFFCLNCDSYGPGCTFINDVIATEVGNVVKLNVQPTGPATILIDKVEFSNGFYYLYSGDTFWKYNFDITDSKYTCKEALKNCSIITDFIVFNNNGSNVNQVKNACVYFSQMLCKPVKLVDSALLASLSVDFGASLHSAFVSVLSNSFGKDLSSCNDMQDCKSTLGFDDVPLDTFNAAVAEAHRYDVLLTDMSFNNFTTSYAKPEEKFPVHDIATCMRVGAKIVNHNVLVKDSIPVVWLVRDFIALSEETRKYIIRTTKVKGITFMLTFNDCRMHTTIPTVCIANKKGAGLPSFSKVKKFFWFLCLFIVAAFFALSFLDFSTQVSSDSDYDFKYIESGQLKTFDNPLSCVHNVFINFDQWHDAKFGFTPVNNPSCPIVVGVSDEARTVPGIPAGVYLAGKTLVFAINTIFGTSGLCFDASGVADKGACIFNSACTTLSGLGGTAVYCYKNGLVEGAKLYSELAPHSYYKMVDGNAVSLPEIISRGFGIRTIRTKAMTYCRVGQCVQSAEGVCFGADRFFVYNAESGSDFVCGTGLFTLLMNVISVFSKTVPVTVLSGQILFNCIIAFVAVAVCFLFTKFKRMFGDMSVGVFTVGACTLLNNVSYIVTQNTLGMLGYATLYFLCTKGVRYMWIWHLGFLISYILIAPWWVLMVYAFSAIFEFMPNLFKLKVSTQLFEGDKFVGSFENAAAGTFVLDMHAYERLANSISTEKLRQYASTYNKYKYYSGSASEADYRLACFAHLAKAMMDYASNHNDTLYTPPTVSYNSTLQAGLRKMAQPSGVVEKCIVRVCYGNMALNGLWLGDIVMCPRHVIASSTTSTIDYDYALSVLRLHNFSISSGNVFLGVVSATMRGALLQIKVNQNNVHTPKYTYRTVRPGESFNILACYDGAAAGVYGVNMRSNYTIRGSFINGACGSPGYNINNGTVEFCYLHQLELGSGCHVGSDLDGVMYGGYEDQPTLQVEGASSLFTENVLAFLYAALINGSTWWLSSSRIAVDRFNEWAVHNGMTTVGNTDCFSILAAKTGVDVQRLLASIQSLHKNFGGKQILGHTSLTDEFTTGEVVRQMYGVNLQGGYVSRACRNVLLVGSFLTFFWSELVSYTKFFWVNPGYVTPMFACLSLLSSLLMFTLKHKTLFFQVFLIPALIVTSCINLAFDVEVYNYLAEHFDYHVSLMGFNAQGLVNIFVCFVVTILHGTYTWRFFNTPASSVTYVVALLTAAYNYFYASDILSCAMTLFASVTGNWFVGAVCYKVAVYMALRFPTFVAIFGDIKSVMFCYLVLGYFTCCFYGILYWFNRFFKVSVGVYDYTVSAAEFKYMVANGLRAPTGTLDSLLLSAKLIGIGGERNIKISSVQSKLTDIKCSNVVLLGCLSSMNVSANSTEWAYCVDLHNKINLCNDPEKAQEMLLALLAFFLSKNSAFGLDDLLESYFNDNSMLQSVASTYVGLPSYVIYENARQQYEDAVNNGSPPQLVKQLRHAMNVAKSEFDREASTQRKLDRMAEQAAAQMYKEARAVNRKSKVVSAMHSLLFGMLRRLDMSSVDTILNLAKDGVVPLSVIPAVSATKLNIVTSDIDSYNRIQREGCVHYAGTIWNIIDIKDNDGKVVHVKEVTAQNAESLSWPLVLGCERIVKLQNNEIIPGKLKQRSIKAEGDGIVGEGKALYNNEGGRTFMYAFISDKPDLRVVKWEFDGGCNTIELEPPRKFLVDSPNGAQIKYLYFVRNLNTLRRGAVLGYIGATVRLQAGKQTEQAINSSLLTLCAFAVDPAKTYIDAVKSGHKPVGNCVKMLANGSGNGQAVTNGVEASTNQDSYGGASVCLYCRAHVEHPSMDGFCRLKGKYVQVPLGTVDPIRFVLENDVCKVCGCWLSNGCTCDRSIMQSTDMAYLNRVRGSSAARLEPCNGTDTQHVYRAFDIYNKDVACLGKFLKVNCVRLKNLDKHDAFYVVKRCTKSAMEHEQSIYSRLEKCGAIAEHDFFTWKDGRAIYGNVCRKDLTEYTMMDLCYALRNFDENNCDVLKSILIKVGACEESYFNNKVWFDPVENEDIHRVYALLGTIVARAMLKCVKFCDAMVEQGIVGVVTLDNQDLNGDFYDFGDFTCSIKGMGVPICTSYYSYMMPVMGMTNCLASECFVKSDIFGEDFKSYDLLEYDFTEHKTALFNKYFKYWGLQYHPNCVDCSDEQCIVHCANFNTLFSTTIPITAFGPLCRKCWIDGVPLVTTAGYHFKQLGIVWNNDLNLHSSRLSINELLQFCSDPALLIASSPALVDQRTVCFSVAALGTGMTNQTVKPGHFNKEFYDFLLEQGFFSEGSELTLKHFFFAQKVDAAVKDFDYYRYNRPTVLDICQARVVYQIVQRYFDIYEGGCITAKEVVVTNLNKSAGYPLNKFGKAGLYYESLSYEEQDELYAYTKRNILPTMTQLNLKYAISGKERARTVGGVSLLSTMTTRQYHQKHLKSIVNTRGASVVIGTTKFYGGWDNMLKNLIDGVENPCLMGWDYPKCDRALPNMIRMISAMILGSKHTTCCSSTDRFFRLCNELAQVLTEVVYSNGGFYLKPGGTTSGDATTAYANSVFNIFQAVSANVNKLLSVDSNVCHNLEVKQLQRKLYECCYRSTIVDDQFVVEYYGYLRKHFSMMILSDDGVVCYNNDYASLGYVADLNAFKAVLYYQNNVFMSASKCWIEPDINKGPHEFCSQHTMQIVDKEGTYYLPYPDPSRILSAGVFVDDVVKTDAVVLLERYVSLAIDAYPLSKHENPEYKKVFYVLLDWVKHLYKTLNAGVLESFSVTLLEDSTAKFWDESFYANMYEKSAVLQSAGLCVVCGSQTVLRCGDCLRRPMLCTKCAYDHVIGTTHKFILAITPYVCCASDCGVNDVTKLYLGGLSYWCHEHKPRLAFPLCSAGNVFGLYKNSATGSPDVEDFNRIATSDWTDVSDYRLANDVKDSLRLFAAETIKAKEESVKSSYACATLHEVVGPKELLLKWEVGRPKPPLNRNSVFTCYHITKNTKFQIGEFVFEKAEYDNDAVTYKTTATTKLVPGMVFVLTSHNVQPLRAPTIANQERYSTIHKLHPAFNIPEAYSSLVPYYQLIGKQKITTIQGPPGSGKSHCVIGLGLYYPGARIVFTACSHAAVDSLCVKASTAYSNDKCSRIIPQRARVECYDGFKSNNTSAQYLFSTVNALPECNADIVVVDEVSMCTNYDLSVINQRISYRHVVYVGDPQQLPAPRVMISRGTLEPKDYNVVTQRMCALKPDVFLHKCYRCPAEIVRTVSEMVYENQFIPVHPDSKQCFKIFCKGNVQVDNGSSINRRQLDVVRMFLAKNPRWSKAVFISPYNSQNYVASRLLGLQIQTVDSSQGSEYDYVIYAQTSDTAHASNVNRFNVAITRAKKGILCIMCDRSLFDLLKFFELKLSDLQANEGCGLFKDCSRGDDLLPPSHANTFMSLADNFKTDQYLAVQIGVNGPIKYEHVISFMGFRFDINIPNHHTLFCTRDFAMRNVRGWLGFDVEGAHVVGSNVGTNVPLQLGFSNGVDFVVRPEGCVVTESGDYIKPVRARAPPGEQFAHLLPLLKRGQPWDVVRKRIVQMCSDYLANLSDILIFVLWAGGLELTTMRYFVKIGPSKSCDCGKVATCYNSALHTYCCFKHALGCDYLYNPYCIDIQQWGYKGSLSLNHHEHCNVHRNEHVASGDAIMTRCLAIHDCFVKNVDWSITYPFIGNEAVINKSGRIVQSHTMRSVLKLYNPKAIYDIGNPKGIRCAVTDAKWFCFDKNPTNSNVKTLEYDYITHGQFDGLCLFWNCNVDMYPEFSVVCRFDTRCRSPLNLEGCNGGSLYVNNHAFHTPAFDKRAFAKLKPMPFFFYDDTECDKLQDSINYVPLRASNCITKCNVGGAVCSKHCAMYHSYVNAYNTFTSAGFTIWVPTSFDTYNLWQTFSNNLQGLENIAFNVLKKGSFVGDEGELPVAVVNDKVLVRDGTVDTLVFTNKTSLPTNVAFELYAKRKVGLTPPITILRNLGVVCTSKCVIWDYEAERPLTTFTKDVCKYTDFEGDVCTLFDNSIVGSLERFSMTQNAVLMSLTAVKKLTGIKLTYGYLNGVPVNTHEDKPFTWYIYTRKNGKFEDYPDGYFTQGRTTADFSPRSDMEKDFLSMDMGLFINKYGLEDYGFEHVVYGDVSKTTLGGLHLLISQVRLACMGVLKIDEFVSSNDSTLKSCTVTYADNPSSKMVCTYMDLLLDDFVSILKSLDLSVVSKVHEVMVDCKMWRWMLWCKDHKLQTFYPQLQASEWKCGYSMPSIYKIQRMCLEPCNLYNYGAGVKLPDGIMFNVVKYTQLCQYLNSTTMCVPHHMRVLHLGAGSDKGVAPGTAVLRRWLPLDAIIVDNDSVDYVSDADYSVTGDCSTLYLSDKFDLVISDMYDGKIKSCDGENVSKEGFFPYINGVITEKLALGGTVAIKVTEFSWNKKLYELIQKFEYWTMFCTSVNTSSSEAFLIGVHYLGDFASGAVIDGNTMHANYIFWRNSTIMTMSYNSVLDLSKFNCKHKATVVVNLKDSSISDVVLGLLKNGKLLVRNNDAICGFSNHLVNVNK.

A CoV Nsp1 globular domain is found at 2–109 (ASNHVTLAFA…ELELTFGRRG (108 aa)). Residues glutamate 59, asparagine 95, glutamate 99, and glutamate 102 each coordinate ssDNA. Residues 112–364 (IVPVDQYMCG…TKLKFDILSG (253 aa)) form the CoV Nsp2 N-terminal domain. The CoV Nsp2 middle domain occupies 383 to 776 (SALVDIVDDA…AEMYNTYLST (394 aa)). One can recognise a CoV Nsp2 C-terminal domain in the interval 778–895 (VENLVLAGVS…VPICFKKKGG (118 aa)). The Ubiquitin-like 1 domain maps to 896-991 (GDVKFSDEVS…VMVSQWPLND (96 aa)). A disordered region spans residues 1009 to 1040 (IDSEGDEVDSSAPEKVADVANSEPGDDGLPVA). One can recognise a Peptidase C16 1 domain in the interval 1057–1296 (SFIKDTPSTV…EPVVKPFYSY (240 aa)). The For PL1-PRO activity role is filled by cysteine 1091. The C4-type 1; degenerate zinc-finger motif lies at 1162–1193 (CGCGTGERIYEGCAFRMTPTLEPFPYGACAQC). Catalysis depends on for PL1-PRO activity residues histidine 1239 and aspartate 1252. The Macro domain maps to 1297–1465 (KNVDFYQGDF…IFKEALVDTT (169 aa)). The Ubiquitin-like 2 domain occupies 1630–1685 (NKSVVIKVTEDTRSVKAVKVESTATYGQQIGPCLVNDTVVTDNKPVVADVVAKVVP). The Peptidase C16 2 domain maps to 1691–1951 (SHYGFDKAGE…LLDTMNYASE (261 aa)). The active-site For PL2-PRO activity is cysteine 1729. The C4-type 2; degenerate zinc finger occupies 1808–1838 (DGCCCSKRVVTAPVVNASVLKLGVEDGLCPH). Residues histidine 1888 and aspartate 1901 each act as for PL2-PRO activity in the active site. Helical transmembrane passes span 1959-1979 (FMSR…GLCF) and 2022-2042 (WFKV…LLFM). The tract at residues 1959–2170 (FMSRNLITVF…FGDEIVVFFI (212 aa)) is HD1. A 3Ecto domain is found at 2038–2102 (ALLFMTIRFT…TQVVWQHLRD (65 aa)). Cystine bridges form between cysteine 2054/cysteine 2080 and cysteine 2072/cysteine 2077. 3 helical membrane passes run 2105 to 2125 (IGNV…GVYV), 2127 to 2147 (AITL…LGLQ), and 2150 to 2170 (IWFL…VFFI). The tract at residues 2176-2266 (MFIKHVCLGC…VVKLNVQPTG (91 aa)) is Y1. The 341-residue stretch at 2176 to 2516 (MFIKHVCLGC…PTVCIANKKG (341 aa)) folds into the CoV Nsp3 Y domain. Residues histidine 2180, cysteine 2185, cysteine 2190, cysteine 2193, cysteine 2226, histidine 2229, cysteine 2233, and cysteine 2236 each coordinate Zn(2+). Positions 2180 to 2193 (HVCLGCDKASCVAC) are ZF1. Residues 2226–2236 (CKKHNFFCLNC) are ZF2. The tract at residues 2267–2356 (PATILIDKVE…LVDSALLASL (90 aa)) is Y2. The coV-Y stretch occupies residues 2267–2516 (PATILIDKVE…PTVCIANKKG (250 aa)). Residues 2357–2414 (SVDFGASLHSAFVSVLSNSFGKDLSSCNDMQDCKSTLGFDDVPLDTFNAAVAEAHRYD) form a Y3 region. Residues 2415–2516 (VLLTDMSFNN…PTVCIANKKG (102 aa)) form a Y4 region. 7 helical membrane passes run 2528-2548 (FFWF…FLDF), 2619-2639 (IPAG…TIFG), 2654-2674 (GACI…TAVY), 2754-2774 (GSDF…ISVF), 2787-2807 (ILFN…FTKF), 2814-2834 (MSVG…SYIV), and 2863-2883 (LGFL…VYAF). The HD2 stretch occupies residues 2528-2883 (FFWFLCLFIV…PWWVLMVYAF (356 aa)). One can recognise a Nsp4C domain in the interval 2902-2997 (LFEGDKFVGS…PTVSYNSTLQ (96 aa)). A Peptidase C30 domain is found at 2998-3299 (AGLRKMAQPS…VRQMYGVNLQ (302 aa)). Residues histidine 3038 and cysteine 3141 each act as for 3CL-PRO activity in the active site. A run of 7 helical transmembrane segments spans residues 3336–3356 (GYVT…MFTL), 3361–3381 (LFFQ…NLAF), 3399–3419 (LMGF…VTIL), 3431–3451 (PASS…YFYA), 3454–3474 (ILSC…VGAV), 3476–3496 (YKVA…FGDI), and 3500–3520 (MFCY…LYWF). An HD3 region spans residues 3336–3520 (GYVTPMFACL…CCFYGILYWF (185 aa)). The region spanning 3580 to 3662 (SKLTDIKCSN…SYFNDNSMLQ (83 aa)) is the RdRp Nsp7 cofactor domain. Residues 3663–3857 (SVASTYVGLP…LGCERIVKLQ (195 aa)) form the RdRp Nsp8 cofactor domain. The 108-residue stretch at 3858-3965 (NNEIIPGKLK…GYIGATVRLQ (108 aa)) folds into the Nsp9 ssRNA-binding domain. Residues 3966-4103 (AGKQTEQAIN…CDRSIMQSTD (138 aa)) enclose the ExoN/MTase coactivator domain. The Zn(2+) site is built by cysteine 4039, cysteine 4042, histidine 4048, cysteine 4055, cysteine 4081, cysteine 4084, cysteine 4092, and cysteine 4094. Zinc fingers lie at residues 4039 to 4055 (CLYC…DGFC) and 4081 to 4094 (CKVC…GCTC). Residues 4106–4355 (YLNRVRGSSA…ASECFVKSDI (250 aa)) form the NiRAN domain. The Nsp12 Interface domain occupies 4361-4459 (KSYDLLEYDF…WNNDLNLHSS (99 aa)). Histidine 4390, cysteine 4396, cysteine 4401, cysteine 4405, and cysteine 4582 together coordinate Zn(2+). The region spanning 4460–5027 (RLSINELLQF…NMYEKSAVLQ (568 aa)) is the Nsp12 RNA-dependent RNA polymerase domain. The rdRp Fingers N-ter stretch occupies residues 4462-4676 (SINELLQFCS…HQKHLKSIVN (215 aa)). Positions 4677-4715 (TRGASVVIGTTKFYGGWDNMLKNLIDGVENPCLMGWDYP) are rdRp Palm N-ter. The 163-residue stretch at 4707–4869 (PCLMGWDYPK…CYNNDYASLG (163 aa)) folds into the RdRp catalytic domain. Positions 4716 to 4774 (KCDRALPNMIRMISAMILGSKHTTCCSSTDRFFRLCNELAQVLTEVVYSNGGFYLKPGG) are rdRp Fingers C-ter. Zn(2+) contacts are provided by histidine 4737, cysteine 4740, and cysteine 4741. The tract at residues 4775-4910 (TTSGDATTAY…NKGPHEFCSQ (136 aa)) is rdRp Palm C-ter. Residues serine 4854, aspartate 4855, and aspartate 4856 each act as for RNA-directed RNA polymerase activity in the active site. The interval 4911-5027 (HTMQIVDKEG…NMYEKSAVLQ (117 aa)) is rdRp Thumb. In terms of domain architecture, CV ZBD spans 5028-5140 (SAGLCVVCGS…EDFNRIATSD (113 aa)). Zn(2+) contacts are provided by cysteine 5032, cysteine 5035, cysteine 5043, cysteine 5046, cysteine 5053, cysteine 5056, histidine 5060, histidine 5066, cysteine 5077, cysteine 5082, cysteine 5099, and histidine 5102. In terms of domain architecture, (+)RNA virus helicase ATP-binding spans 5275 to 5466 (STIHKLHPAF…MCALKPDVFL (192 aa)). Residue 5310–5317 (GPPGSGKS) participates in ATP binding. Positions 5467 to 5636 (HKCYRCPAEI…EGCGLFKDCS (170 aa)) constitute a (+)RNA virus helicase C-terminal domain. One can recognise an ExoN domain in the interval 5696-5910 (LFCTRDFAMR…RCLAIHDCFV (215 aa)). Active-site for exoribonuclease activity residues include aspartate 5714, glutamate 5716, and glutamate 5815. The Zn(2+) site is built by cysteine 5831, cysteine 5833, cysteine 5849, histidine 5852, histidine 5880, cysteine 5884, and histidine 5887. Active-site for exoribonuclease activity residues include histidine 5891 and aspartate 5896. Cysteine 5902 contributes to the Zn(2+) binding site. Positions 5919 to 6140 (YPFIGNEAVI…NLWQTFSNNL (222 aa)) constitute an N7-MTase domain. 5954 to 5960 (DIGNPKG) is a binding site for S-adenosyl-L-methionine. The segment at 6031-6045 (CNGGSLYVNNHAFHT) is gpppA-binding. Residues cysteine 6069, cysteine 6086, cysteine 6097, and histidine 6100 each coordinate Zn(2+). Positions 6142 to 6202 (GLENIAFNVL…NVAFELYAKR (61 aa)) constitute a Nsp15 N-terminal oligomerization domain. The AV-Nsp11N/CoV-Nsp15M domain maps to 6203-6320 (KVGLTPPITI…IYTRKNGKFE (118 aa)). Positions 6337-6477 (SPRSDMEKDF…KDHKLQTFYP (141 aa)) constitute a NendoU domain. Active-site for uridylate-specific endoribonuclease activity residues include histidine 6367, histidine 6382, and lysine 6423. Residues 6481–6777 (ASEWKCGYSM…AICGFSNHLV (297 aa)) enclose the Nidovirus-type SAM-dependent 2'-O-MTase domain. Catalysis depends on for 2'-O-methyltransferase residues lysine 6525, aspartate 6609, lysine 6649, and glutamate 6682.

This sequence belongs to the coronaviruses polyprotein 1ab family. As to quaternary structure, interacts with PL-PRO and nsp6. Monomer. Homodimer; disulfide-linked. In terms of assembly, interacts with nsp8 and nsp12 to form the replication-transcription complex (RTC): nsp12, nsp7, two subunits of nsp8, and up to two subunits of nsp13. Eight copies of nsp7 and eight copies of nsp8 assemble to form a heterohexadecamer dsRNA-encircling ring structure. As to quaternary structure, interacts with nsp7, nsp13 and nsp12 to form the replication-transcription complex (RTC): nsp12, nsp7, two subunits of nsp8, and up to two subunits of nsp13. Eight copies of nsp7 and eight copies of nsp8 assemble to form a heterohexadecamer dsRNA-encircling ring structure. Homodimer. In terms of assembly, forms a dodecamer and interacts with nsp14 and nsp16; these interactions enhance nsp14 and nsp16 enzymatic activities. Mn(2+) serves as cofactor. Post-translationally, specific enzymatic cleavages in vivo by its own proteases yield mature proteins. 3CL-PRO and PL-PRO proteinases are autocatalytically processed.

It localises to the host cytoplasm. The protein localises to the host nucleus. Its subcellular location is the host membrane. The protein resides in the host perinuclear region. It is found in the host endoplasmic reticulum. It localises to the host endoplasmic reticulum-Golgi intermediate compartment. It carries out the reaction Thiol-dependent hydrolysis of ester, thioester, amide, peptide and isopeptide bonds formed by the C-terminal Gly of ubiquitin (a 76-residue protein attached to proteins as an intracellular targeting signal).. The catalysed reaction is a 5'-end diphospho-ribonucleoside in mRNA + GTP + H(+) = a 5'-end (5'-triphosphoguanosine)-ribonucleoside in mRNA + diphosphate. The enzyme catalyses RNA(n) + a ribonucleoside 5'-triphosphate = RNA(n+1) + diphosphate. It catalyses the reaction ATP + H2O = ADP + phosphate + H(+). It carries out the reaction a 5'-end (5'-triphosphoguanosine)-ribonucleoside in mRNA + S-adenosyl-L-methionine = a 5'-end (N(7)-methyl 5'-triphosphoguanosine)-ribonucleoside in mRNA + S-adenosyl-L-homocysteine. The catalysed reaction is uridylyl-uridylyl-ribonucleotide-RNA = a 3'-end uridylyl-2',3'-cyclophospho-uridine-RNA + a 5'-end dephospho-ribonucleoside-RNA. The enzyme catalyses a 5'-end (N(7)-methyl 5'-triphosphoguanosine)-ribonucleoside in mRNA + S-adenosyl-L-methionine = a 5'-end (N(7)-methyl 5'-triphosphoguanosine)-(2'-O-methyl-ribonucleoside) in mRNA + S-adenosyl-L-homocysteine + H(+). With respect to regulation, inhibited by the substrate-analog Cbz-Val-Asn-Ser-Thr-Leu-Gln-CMK. Inhibited by (R)-16. Multifunctional protein responsible for the transcription of negative stranded RNA, leader RNA, subgenomic mRNAs and progeny virion RNA as well as proteinases responsible for the cleavage of the polyprotein into functional products. In terms of biological role, plays a role in the inhibition of host interferon and pro-inflammatory cytokines production. Suppresses host RELA/p65 activation by blocking NFKBIA phosphorylation. Targets also the RLR pathway downstream of the IRF3 activation by targeting host CREBBP to proteasomal degradation. Its function is as follows. Responsible for the cleavages located at the N-terminus of the replicase polyprotein. Participates together with nsp4 in the assembly of virally-induced cytoplasmic double-membrane vesicles necessary for viral replication. Forms a molecular pore spanning the double membrane of the coronavirus replication organelle. In addition, PLP2 possesses a deubiquitinating/deISGylating activity and processes both 'Lys-48'- and 'Lys-63'-linked polyubiquitin chains from cellular substrates. PLP2 also antagonizes innate immune induction of type I interferon by blocking the nuclear translocation of host IRF-3. Participates in the inhibition of the integrated stress response (ISR) in the infected host cell. Functionally, participates in the assembly of virally-induced cytoplasmic double-membrane vesicles necessary for viral replication. Responsible for the majority of cleavages as it cleaves the C-terminus of replicase polyprotein at 11 sites. Recognizes substrates containing the core sequence [ILMVF]-Q-|-[SGACN]. Also contains an ADP-ribose-1''-phosphate (ADRP)-binding function. Participates in the inhibition of the integrated stress response (ISR) in the infected host cell. In terms of biological role, plays a role in the initial induction of autophagosomes from host endoplasmic reticulum. Later, limits the expansion of these phagosomes that are no longer able to deliver viral components to lysosomes. Its function is as follows. Plays a role in viral RNA synthesis. Forms a hexadecamer with nsp8 (8 subunits of each) that may participate in viral replication by acting as a primase. Alternatively, may synthesize substantially longer products than oligonucleotide primers. Functionally, plays a role in viral RNA synthesis. Forms a hexadecamer with nsp7 (8 subunits of each) that may participate in viral replication by acting as a primase. Alternatively, may synthesize substantially longer products than oligonucleotide primers. Forms a primer, NSP9-pU, which is utilized by the polymerase for the initiation of RNA chains. Interacts with ribosome signal recognition particle RNA (SRP). Together with NSP8, suppress protein integration into the cell membrane, thereby disrupting host immune defenses. In terms of biological role, plays a pivotal role in viral transcription by stimulating both nsp14 3'-5' exoribonuclease and nsp16 2'-O-methyltransferase activities. Therefore plays an essential role in viral mRNAs cap methylation. Its function is as follows. RNA-directed RNA polymerase that catalyzes the transcription of viral genomic and subgenomic RNAs. Acts in complex with nsp7 and nsp8 to transcribe both the minus and positive strands of genomic RNA. The kinase-like NiRAN domain of NSP12 attaches one or more nucleotides to the amino terminus of NSP9, forming a covalent RNA-protein intermediate that serves as transcription/replication primer. Subgenomic RNAs (sgRNAs) are formed by discontinuous transcription: The polymerase has the ability to pause at transcription-regulating sequences (TRS) and jump to the leader TRS, resulting in a major deletion. This creates a series of subgenomic RNAs that are replicated, transcribed and translated. In addition, Nsp12 is a subunit of the viral RNA capping enzyme that catalyzes the RNA guanylyltransferase reaction for genomic and sub-genomic RNAs. Subsequently, the NiRAN domain transfers RNA to GDP, and forms the core cap structure GpppA-RNA. Functionally, plays a role in viral RNA synthesis. Multi-functional protein with a zinc-binding domain in N-terminus displaying RNA and DNA duplex-unwinding activities with 5' to 3' polarity. ATPase activity is strongly stimulated by poly(U), poly(dT), poly(C), poly(dA), but not by poly(G). Plays a role in viral RNA synthesis through two distinct activities. The N7-guanine methyltransferase activity plays a role in the formation of the cap structure GpppA-RNA. The proofreading exoribonuclease reduces the sensitivity of the virus to RNA mutagens during replication. This activity acts on both ssRNA and dsRNA in a 3'-5' direction. In terms of biological role, plays a role in viral transcription/replication and prevents the simultaneous activation of host cell dsRNA sensors, such as MDA5/IFIH1, OAS, and PKR. Acts by degrading the 5'-polyuridines generated during replication of the poly(A) region of viral genomic and subgenomic RNAs. Catalyzes a two-step reaction in which a 2'3'-cyclic phosphate (2'3'-cP) is first generated by 2'-O transesterification, which is then hydrolyzed to a 3'-phosphate (3'-P). If not degraded, poly(U) RNA would hybridize with poly(A) RNA tails and activate host dsRNA sensors. Decreases the RNA levels and thus the expression of host TBK1 and IRF3, antagonizing the host innate response. This is Replicase polyprotein 1ab (rep) from Sus scrofa (Pig).